The following is a 1113-amino-acid chain: Lon protease homolog, mitochondrial (1113 aa).

The N-terminal 61 residues, 1–61 (MLRGQTLPWR…RAFSSSSIRR (61 aa)), are a transit peptide targeting the mitochondrion. A disordered region spans residues 42-196 (SRLHRSLPTS…SGEKALQKPS (155 aa)). 3 stretches are compositionally biased toward basic and acidic residues: residues 64 to 99 (KPPP…RKAA), 124 to 143 (KAGA…KDGN), and 178 to 192 (DGGK…EKAL). The 253-residue stretch at 204–456 (VMAIPIAKRP…KALVVLKKEL (253 aa)) folds into the Lon N-terminal domain. 609–616 (GPPGVGKT) is an ATP binding site. Over residues 828 to 858 (LTDEGKAVQEESQKETESPDSKSPVDPEKST) the composition is skewed to basic and acidic residues. The interval 828–864 (LTDEGKAVQEESQKETESPDSKSPVDPEKSTTETPRV) is disordered. The Lon proteolytic domain occupies 898–1084 (TFPPGVTMGL…SEVFDLLFTD (187 aa)). Catalysis depends on residues Ser990 and Lys1033.

The protein belongs to the peptidase S16 family. In terms of assembly, homohexamer or homoheptamer. Organized in a ring with a central cavity.

The protein localises to the mitochondrion matrix. The enzyme catalyses Hydrolysis of proteins in presence of ATP.. In terms of biological role, ATP-dependent serine protease that mediates the selective degradation of misfolded, unassembled or oxidatively damaged polypeptides as well as certain short-lived regulatory proteins in the mitochondrial matrix. May also have a chaperone function in the assembly of inner membrane protein complexes. Participates in the regulation of mitochondrial gene expression and in the maintenance of the integrity of the mitochondrial genome. Binds to mitochondrial DNA in a site-specific manner. The protein is Lon protease homolog, mitochondrial (pim1) of Aspergillus niger (strain ATCC MYA-4892 / CBS 513.88 / FGSC A1513).